Consider the following 259-residue polypeptide: DNA-directed RNA polymerase 30 kDa polypeptide (259 aa).

The segment at 155–195 (YNTPCPNCKSRNTTPMMIQTRAADEPPLVRHACRDCKQHFK) adopts a TFIIS-type zinc-finger fold. Zn(2+) is bound by residues cysteine 159, cysteine 162, cysteine 187, and cysteine 190. A disordered region spans residues 214–259 (ENKEITEILPDNNPSPPESPEPASPIDDGLIRSTFDRNDEPPEDDE). Residues 226–236 (NPSPPESPEPA) show a composition bias toward pro residues.

The protein belongs to the poxviridae DNA-directed RNA polymerase 30 kDa subunit family. The DNA-dependent RNA polymerase (vRNAP) consists of eight subunits encoded by early viral genes and termed according to their apparent molecular masses Rpo147, Rpo132, Rpo35, Rpo30, Rpo22, Rpo19, Rpo18, and Rpo7. The same holoenzyme, with the addition of the transcription-specificity factor RAP94, is used for early gene expression.

It localises to the virion. It is found in the host cytoplasm. It carries out the reaction RNA(n) + a ribonucleoside 5'-triphosphate = RNA(n+1) + diphosphate. In terms of biological role, part of the DNA-dependent RNA polymerase which catalyzes the transcription of viral DNA into RNA using the four ribonucleoside triphosphates as substrates. Responsible for the transcription of early, intermediate and late genes. DNA-dependent RNA polymerase associates with the early transcription factor (ETF), itself composed of OPG118/D6 and OPG134/A8, thereby allowing the early genes transcription. Late transcription, and probably also intermediate transcription, require newly synthesized RNA polymerase. The chain is DNA-directed RNA polymerase 30 kDa polypeptide (OPG066) from Homo sapiens (Human).